The following is a 395-amino-acid chain: PCI domain-containing protein 2 homolog (395 aa).

The PCI domain maps to 208–389 (ITYKYFVGRR…NKLVVSKQNP (182 aa)).

Belongs to the CSN12 family. In terms of assembly, component of the nuclear pore complex (NPC)-associated TREX-2/AMEX complex (anchoring and mRNA export complex), composed of e(y)2, xmas and PCID2. Interaction between the TREX-2/AMEX complex and the ORC complex is required for ORC localization to mRNPs, and consequently mRNA export. Within the TREX-2/AMEX-ORC complex, interacts with Orc3 and Orc4. Interacts with sbr/NXF1. Interacts with Moe. Interacts with nudC; required to maintain stability in the cytoplasm. In terms of processing, mono- and poly-ubiquitinated.

It is found in the nucleus. The protein localises to the cytoplasm. Its subcellular location is the nucleus membrane. It localises to the cytoskeleton. Required for the export of nuclear mRNAs and involved in mRNA trafficking in the cytoplasm. Component of the nuclear pore complex (NPC)-associated TREX-2/AMEX complex (anchoring and mRNA export complex) which functions in docking export-competent ribonucleoprotein particles (mRNPs) to the nuclear entrance of the nuclear pore complex (nuclear basket), thereby enabling the export of mRNAs to the cytoplasm through the nuclear pores. Within the complex, specifically promotes the association of factors involved in regulating nuclear mRNA export, such as Moe, sbr/NXF1 and the ORC complex, to the mRNPs particles. In the cytoplasm, functions independently of its role in the TREX-2/AMEX complex, to promote cytoplasmic mRNA trafficking together with nudC. Associates with translationally active polysomes. This is PCI domain-containing protein 2 homolog from Drosophila melanogaster (Fruit fly).